The primary structure comprises 133 residues: uncharacterized protein (133 aa).

A run of 4 helical transmembrane segments spans residues 5-27, 42-64, 77-99, and 103-125; these read KLFF…FSLI, IAWN…YSLY, ALIS…TFSS, and LVWW…LLLK.

The protein localises to the cell membrane. This is an uncharacterized protein from Bacillus subtilis (strain 168).